Consider the following 109-residue polypeptide: Nucleoid-associated protein A1S_1684 (109 aa).

This sequence belongs to the YbaB/EbfC family. As to quaternary structure, homodimer.

Its subcellular location is the cytoplasm. The protein resides in the nucleoid. Its function is as follows. Binds to DNA and alters its conformation. May be involved in regulation of gene expression, nucleoid organization and DNA protection. The protein is Nucleoid-associated protein A1S_1684 of Acinetobacter baumannii (strain ATCC 17978 / DSM 105126 / CIP 53.77 / LMG 1025 / NCDC KC755 / 5377).